Here is a 240-residue protein sequence, read N- to C-terminus: Probable transcriptional regulatory protein YrbC (240 aa).

It belongs to the TACO1 family.

Its subcellular location is the cytoplasm. This is Probable transcriptional regulatory protein YrbC (yrbC) from Bacillus subtilis (strain 168).